Reading from the N-terminus, the 63-residue chain is MFTTKKPLLLLFFLGIISLSVCEQERDADEEDGGEVTEEEVKRAALKGCWTKSIPPKPCFGKR.

A signal peptide spans 1–22; it reads MFTTKKPLLLLFFLGIISLSVC. Positions 23 to 41 are excised as a propeptide; it reads EQERDADEEDGGEVTEEEV.

This sequence belongs to the frog skin active peptide (FSAP) family. Brevinin subfamily. As to expression, expressed by the skin glands.

Its subcellular location is the secreted. This chain is Odorranain-B1, found in Odorrana hainanensis (Odor frog).